The chain runs to 141 residues: uncharacterized protein (141 aa).

The next 2 helical transmembrane spans lie at 20-42 and 52-74; these read FLVN…FCLA and LHLC…IFTL.

Its subcellular location is the cell membrane. This is an uncharacterized protein from Archaeoglobus fulgidus (strain ATCC 49558 / DSM 4304 / JCM 9628 / NBRC 100126 / VC-16).